The following is a 1085-amino-acid chain: Solute carrier family 12 member 4 (1085 aa).

At 1-119 the chain is on the cytoplasmic side; it reads MPHFTVVPVD…RRAAKAPSMG (119 aa). Ser24, Ser47, Ser81, and Ser88 each carry phosphoserine. The discontinuously helical transmembrane segment at 120–141 threads the bilayer; the sequence is TLMGVYLPCLQNIFGVILFLRL. Asn131 and Ile132 together coordinate K(+). Residues 142–149 lie on the Extracellular side of the membrane; the sequence is TWMVGTAG. The helical transmembrane segment at 150–172 threads the bilayer; it reads VLQALLIVLICCCCTLLTAISMS. At 173 to 196 the chain is on the cytoplasmic side; it reads AIATNGVVPAGGSYFMISRSLGPE. The chain crosses the membrane as a helical span at residues 197–225; sequence FGGAVGLCFYLGTTFAAAMYILGAIEILL. Tyr216 provides a ligand contact to K(+). The Extracellular segment spans residues 226–248; the sequence is TYIAPPAAIFYPSGTHDMSSATL. 2 helical membrane passes run 249–271 and 272–297; these read NNMR…VGVK and YVNK…GGIK. Topologically, residues 298–419 are extracellular; sequence SIFDPPVFPV…LYVVADIATS (122 aa). A disulfide bridge connects residues Cys308 and Cys323. Residues Asn312, Asn331, and Asn347 are each glycosylated (N-linked (GlcNAc...) asparagine). Residues Cys343 and Cys353 are joined by a disulfide bond. Residues 420 to 440 traverse the membrane as a helical segment; that stretch reads FTVLVGIFFPSVTGIMAGSNR. Positions 429 and 432 each coordinate K(+). 3 residues coordinate chloride: Gly433, Ile434, and Met435. The Cytoplasmic segment spans residues 441–450; the sequence is SGDLRDAQKS. Residues 451–473 form a helical membrane-spanning segment; sequence IPVGTILAIVTTSLVYFSSVILF. Over 474-504 the chain is Extracellular; that stretch reads GACIEGVVLRDKYGDGVSRNLVVGTLAWPSP. The helical transmembrane segment at 505-531 threads the bilayer; that stretch reads WVIVVGSFFSTCGAGLQSLTGAPRLLQ. The Cytoplasmic portion of the chain corresponds to 532–554; sequence AIAKDNIIPFLRVFGHGKANGEP. The next 2 helical transmembrane spans lie at 555–575 and 576–598; these read TWAL…ASLD and MVAP…ACAV. Chloride is bound at residue Tyr589. The Cytoplasmic segment spans residues 599–612; the sequence is QTLLRTPNWRPRFK. The next 2 helical transmembrane spans lie at 613-635 and 636-651; these read YYHW…VSSW and YYAL…IYKY. Residues 652-1085 lie on the Cytoplasmic side of the membrane; the sequence is IEYQGAEKEW…GGREVITIYS (434 aa). A scissor helix region spans residues 665–681; it reads IRGLSLSAARYALLRLE. ATP contacts are provided by Leu697, Lys699, Lys707, Tyr708, and Val730. Ser734 carries the phosphoserine modification. Residues Gly794, Trp795, and Tyr797 each coordinate ATP. Phosphoserine is present on residues Ser916 and Ser967. At Thr983 the chain carries Phosphothreonine. Ser1050 carries the post-translational modification Phosphoserine.

It belongs to the SLC12A transporter family. K/Cl co-transporter subfamily. As to quaternary structure, homodimer; adopts a domain-swap conformation at the scissor helices connecting the transmembrane domain and C-terminal domain. Heterodimer with other K-Cl cotransporters. In terms of processing, phosphorylated, phosphorylation may regulate transporter activity. Detected in embryo, adult heart, erythrocytes, brain, kidney, stomach, ovary, testis and liver.

It is found in the cell membrane. The enzyme catalyses K(+)(in) + chloride(in) = K(+)(out) + chloride(out). Inhibited by WNK3. Mediates electroneutral potassium-chloride cotransport when activated by cell swelling. May contribute to cell volume homeostasis in single cells. May be involved in the regulation of basolateral Cl(-) exit in NaCl absorbing epithelia. In Mus musculus (Mouse), this protein is Solute carrier family 12 member 4 (Slc12a4).